A 195-amino-acid chain; its full sequence is IYGSKVQYTASMYWVLGFIFLFTLGGLTGIVLSNSSLDIMLHDTYYVVAHFHYVLSMGAVFAIFAGFNFWFPVMTGLVLHERLAKAQFIVMFIAVNMTFFPQHFLGLAGMPRRYSDYPDSYFMWNQLSSYGSLMSVFAVLLFVLIVWEAFLSQRSLLFVDATLYSREWSDGYFPPDFHSNIYQSYITIYKTYYSK.

A helical transmembrane segment spans residues 12–32 (MYWVLGFIFLFTLGGLTGIVL). The Mg(2+) site is built by histidine 42 and aspartate 43. Histidine 50 contributes to the heme a3 binding site. Histidine 52 lines the Fe(II)-heme a pocket. 3 helical membrane-spanning segments follow: residues 59–79 (AVFA…GLVL), 88–108 (FIVM…LGLA), and 131–151 (GSLM…EAFL).

The protein belongs to the heme-copper respiratory oxidase family. Component of the cytochrome c oxidase (complex IV, CIV), a multisubunit enzyme composed of a catalytic core of 3 subunits and several supernumerary subunits. The complex exists as a monomer or a dimer and forms supercomplexes (SCs) in the inner mitochondrial membrane with ubiquinol-cytochrome c oxidoreductase (cytochrome b-c1 complex, complex III, CIII). Requires heme as cofactor. Cu cation serves as cofactor.

The protein localises to the mitochondrion inner membrane. The enzyme catalyses 4 Fe(II)-[cytochrome c] + O2 + 8 H(+)(in) = 4 Fe(III)-[cytochrome c] + 2 H2O + 4 H(+)(out). It functions in the pathway energy metabolism; oxidative phosphorylation. Its function is as follows. Component of the cytochrome c oxidase, the last enzyme in the mitochondrial electron transport chain which drives oxidative phosphorylation. The respiratory chain contains 3 multisubunit complexes succinate dehydrogenase (complex II, CII), ubiquinol-cytochrome c oxidoreductase (cytochrome b-c1 complex, complex III, CIII) and cytochrome c oxidase (complex IV, CIV), that cooperate to transfer electrons derived from NADH and succinate to molecular oxygen, creating an electrochemical gradient over the inner membrane that drives transmembrane transport and the ATP synthase. Cytochrome c oxidase is the component of the respiratory chain that catalyzes the reduction of oxygen to water. Electrons originating from reduced cytochrome c in the intermembrane space (IMS) are transferred via the dinuclear copper A center (CU(A)) of subunit 2 and heme A of subunit 1 to the active site in subunit 1, a binuclear center (BNC) formed by heme A3 and copper B (CU(B)). The BNC reduces molecular oxygen to 2 water molecules using 4 electrons from cytochrome c in the IMS and 4 protons from the mitochondrial matrix. The sequence is that of Cytochrome c oxidase subunit 1 (COI) from Albinaria turrita (Door snail).